Reading from the N-terminus, the 409-residue chain is LL-diaminopimelate aminotransferase (409 aa).

Substrate is bound by residues tyrosine 15 and glycine 42. Pyridoxal 5'-phosphate-binding positions include tyrosine 72, 108 to 109 (AK), tyrosine 132, asparagine 186, tyrosine 217, and 245 to 247 (SFS). Substrate is bound by residues lysine 109, tyrosine 132, and asparagine 186. Lysine 248 carries the N6-(pyridoxal phosphate)lysine modification. Pyridoxal 5'-phosphate is bound by residues arginine 256 and asparagine 291. Asparagine 291 and arginine 387 together coordinate substrate.

It belongs to the class-I pyridoxal-phosphate-dependent aminotransferase family. LL-diaminopimelate aminotransferase subfamily. As to quaternary structure, homodimer. The cofactor is pyridoxal 5'-phosphate.

It catalyses the reaction (2S,6S)-2,6-diaminopimelate + 2-oxoglutarate = (S)-2,3,4,5-tetrahydrodipicolinate + L-glutamate + H2O + H(+). It functions in the pathway amino-acid biosynthesis; L-lysine biosynthesis via DAP pathway; LL-2,6-diaminopimelate from (S)-tetrahydrodipicolinate (aminotransferase route): step 1/1. In terms of biological role, involved in the synthesis of meso-diaminopimelate (m-DAP or DL-DAP), required for both lysine and peptidoglycan biosynthesis. Catalyzes the direct conversion of tetrahydrodipicolinate to LL-diaminopimelate. This Parabacteroides distasonis (strain ATCC 8503 / DSM 20701 / CIP 104284 / JCM 5825 / NCTC 11152) protein is LL-diaminopimelate aminotransferase.